The sequence spans 486 residues: N-succinylglutamate 5-semialdehyde dehydrogenase (486 aa).

220-225 (GSSRTG) provides a ligand contact to NAD(+). Catalysis depends on residues Glu243 and Cys277.

Belongs to the aldehyde dehydrogenase family. AstD subfamily.

The catalysed reaction is N-succinyl-L-glutamate 5-semialdehyde + NAD(+) + H2O = N-succinyl-L-glutamate + NADH + 2 H(+). The protein operates within amino-acid degradation; L-arginine degradation via AST pathway; L-glutamate and succinate from L-arginine: step 4/5. In terms of biological role, catalyzes the NAD-dependent reduction of succinylglutamate semialdehyde into succinylglutamate. In Shewanella sediminis (strain HAW-EB3), this protein is N-succinylglutamate 5-semialdehyde dehydrogenase.